The sequence spans 206 residues: Testis-expressed protein 38 (206 aa).

Residues 15 to 35 (VSLYFGILGLCSVITGGCIIF) form a helical membrane-spanning segment.

It is found in the membrane. This Homo sapiens (Human) protein is Testis-expressed protein 38 (TEX38).